Here is a 264-residue protein sequence, read N- to C-terminus: tRNA (guanine-N(1)-)-methyltransferase (264 aa).

S-adenosyl-L-methionine-binding positions include glycine 125 and 145-150; that span reads LGDFVL.

This sequence belongs to the RNA methyltransferase TrmD family. Homodimer.

It localises to the cytoplasm. It catalyses the reaction guanosine(37) in tRNA + S-adenosyl-L-methionine = N(1)-methylguanosine(37) in tRNA + S-adenosyl-L-homocysteine + H(+). Specifically methylates guanosine-37 in various tRNAs. The sequence is that of tRNA (guanine-N(1)-)-methyltransferase from Burkholderia lata (strain ATCC 17760 / DSM 23089 / LMG 22485 / NCIMB 9086 / R18194 / 383).